The primary structure comprises 155 residues: uncharacterized protein (155 aa).

The tract at residues 56-79 (GEKRPTHRRPYRRTKPYPKRPSML) is disordered. Positions 60–73 (PTHRRPYRRTKPYP) are enriched in basic residues.

This is an uncharacterized protein from Sinorhizobium fredii (strain NBRC 101917 / NGR234).